The sequence spans 1471 residues: Myosin-51 (1471 aa).

The region spanning 7 to 61 (SVGSECWVSNNNGHWDAARLIEIKDNGGGKVVATVAKSSGVLETVNYQQLQNRNI) is the Myosin N-terminal SH3-like domain. The Myosin motor domain maps to 65-749 (ESPSDLTNLP…VIGNFEEAHR (685 aa)). 159–166 (GESGAGKT) contributes to the ATP binding site. The interval 628 to 650 (LSQLMTTVSSTNVHYIRCIKPNE) is actin-binding. 6 consecutive IQ domains span residues 753 to 773 (SKSTVLLQSAIRGFFTRKEYQ), 776 to 796 (VKFIIKLQSVIMGWLTRQRFE), 801 to 821 (ERAAILIQAHWRSYIQRKRYL), 824 to 844 (IKCAIVIQSIVRKNIAYSRYI), 849 to 869 (ESSATLLAKFWRAYNARKTFR), and 872 to 892 (KKSVIALQCVSRSVLTRRYLR). A coiled-coil region spans residues 909-952 (KNLQASITEVSKQLKSNSKKVTVLRNKLNILNNSLSKWKCLIKK). Positions 1171–1417 (EKPLQAVLYW…SKAVEALSCK (247 aa)) constitute a Dilute domain.

It belongs to the TRAFAC class myosin-kinesin ATPase superfamily. Myosin family.

Its subcellular location is the cytoplasm. Involved in cytokinesis. The sequence is that of Myosin-51 (myo51) from Schizosaccharomyces pombe (strain 972 / ATCC 24843) (Fission yeast).